Consider the following 613-residue polypeptide: MEQNPQSQLKLLVTRGKEQGYLTYAEVNDHLPEDIVDSDQIEDIIQMINDMGIQVMEEAPDADDLMLAENTADEDAAEAAAQVLSSVESEIGRTTDPVRMYMREMGTVELLTREGEIDIAKRIEDGINQVQCSVAEYPEAITYLLEQYDRVEAEEARLSDLITGFVDPNAEEDLAPTATHVGSELSQEDLDDDEDEDEEDGDDDSADDDNSIDPELAREKFAELRAQYVVTRDTIKAKGRSHATAQEEILKLSEVFKQFRLVPKQFDYLVNSMRVMMDRVRTQERLIMKLCVEQCKMPKKNFITLFTGNETSDTWFNAAIAMNKPWSEKLHDVSEEVHRALQKLQQIEEETGLTIEQVKDINRRMSIGEAKARRAKKEMVEANLRLVISIAKKYTNRGLQFLDLIQEGNIGLMKAVDKFEYRRGYKFSTYATWWIRQAITRSIADQARTIRIPVHMIETINKLNRISRQMLQEMGREPTPEELAERMLMPEDKIRKVLKIAKEPISMETPIGDDEDSHLGDFIEDTTLELPLDSATTESLRAATHDVLAGLTAREAKVLRMRFGIDMNTDYTLEEVGKQFDVTRERIRQIEAKALRKLRHPSRSEVLRSFLDD.

The sigma-70 factor domain-1 stretch occupies residues 2–80; it reads EQNPQSQLKL…TADEDAAEAA (79 aa). A disordered region spans residues 176–213; that stretch reads PTATHVGSELSQEDLDDDEDEDEEDGDDDSADDDNSID. The span at 186–212 shows a compositional bias: acidic residues; it reads SQEDLDDDEDEDEEDGDDDSADDDNSI. The segment at 379-449 is sigma-70 factor domain-2; it reads MVEANLRLVI…TRSIADQART (71 aa). Residues 403–406 carry the Interaction with polymerase core subunit RpoC motif; sequence DLIQ. The sigma-70 factor domain-3 stretch occupies residues 458–534; the sequence is ETINKLNRIS…DTTLELPLDS (77 aa). The sigma-70 factor domain-4 stretch occupies residues 547–600; the sequence is VLAGLTAREAKVLRMRFGIDMNTDYTLEEVGKQFDVTRERIRQIEAKALRKLRH. The H-T-H motif DNA-binding region spans 573 to 592; the sequence is LEEVGKQFDVTRERIRQIEA. The tract at residues 584–599 is interaction with anti-sigma factors; sequence RERIRQIEAKALRKLR.

The protein belongs to the sigma-70 factor family. RpoD/SigA subfamily. As to quaternary structure, interacts transiently with the RNA polymerase catalytic core formed by RpoA, RpoB, RpoC and RpoZ (2 alpha, 1 beta, 1 beta' and 1 omega subunit) to form the RNA polymerase holoenzyme that can initiate transcription. Identified in a complex containing RpoD, the RNA polymerase subunits RpoA, RpoB and RpoZ, CRP and DNA. Interacts with Rsd; this prevents interaction with the RNA polymerase catalytic core and with promoter DNA, and as a consequence, promotes transcription from promoters that require alternative sigma factors. Interacts with phage T4 AsiA; this interferes with binding to DNA and to the RNA polymerase. (Microbial infection) Interacts with Escherichia phage lambda antitermination protein Q.

It is found in the cytoplasm. In terms of biological role, sigma factors are initiation factors that promote the attachment of RNA polymerase to specific initiation sites and are then released. This sigma factor is the primary sigma factor during exponential growth. Preferentially transcribes genes associated with fast growth, such as ribosomal operons, other protein-synthesis related genes, rRNA- and tRNA-encoding genes and prfB. In Escherichia coli (strain K12), this protein is RNA polymerase sigma factor RpoD.